The primary structure comprises 537 residues: Pheophorbide a oxygenase, chloroplastic (537 aa).

The N-terminal 49 residues, 1–49 (MSVVLLSSTSATITKSQSKKIPFLSPTTKFPLKVSISPSRSKLFHNPLR), are a transit peptide targeting the chloroplast. Residues 51-77 (AAPPSVPTSDSTEEKRIEEEYGGDKEE) form a disordered region. Basic and acidic residues predominate over residues 62–77 (TEEKRIEEEYGGDKEE). Positions 88–200 (WYPVSLVEDL…TMVSQGLLFV (113 aa)) constitute a Rieske domain. Cysteine 130, histidine 132, cysteine 150, and histidine 153 together coordinate [2Fe-2S] cluster.

Interacts with HCAR, SGR1, RCCR, PPH and the LHCII complex. Part of a SGR1-CCE-LHCII complex, which acts in chlorophyll breakdown.

The protein resides in the plastid. The protein localises to the chloroplast thylakoid membrane. It carries out the reaction pheophorbide a + 2 reduced [2Fe-2S]-[ferredoxin] + O2 + 2 H(+) = red chlorophyll catabolite + 2 oxidized [2Fe-2S]-[ferredoxin]. It participates in porphyrin-containing compound metabolism; chlorophyll degradation. Might be regulated by a phosphorylation/dephosphorylation mechanism. Catalyzes the key reaction of chlorophyll catabolism, porphyrin macrocycle cleavage of pheophorbide a (pheide a) to a primary fluorescent catabolite (pFCC). Works in a two-step reaction with red chlorophyll catabolite reductase (RCCR). Creates the intermediate RCC through the opening of the porphyrin macrocycle by the introduction of one atom of molecular oxygen at the alpha-methine bridge. Seems to be specific for pheide a. Belongs to the chlorophyll catabolic enzymes (CCEs). The polypeptide is Pheophorbide a oxygenase, chloroplastic (PAO) (Arabidopsis thaliana (Mouse-ear cress)).